A 206-amino-acid polypeptide reads, in one-letter code: Small ribosomal subunit protein uS4 (206 aa).

The disordered stretch occupies residues 27 to 47 (PSESKCNMNAAPGQHGGRRGR). The region spanning 96 to 158 (QRLDNVVYRM…SRKQIRIQSA (63 aa)) is the S4 RNA-binding domain.

The protein belongs to the universal ribosomal protein uS4 family. In terms of assembly, part of the 30S ribosomal subunit. Contacts protein S5. The interaction surface between S4 and S5 is involved in control of translational fidelity.

One of the primary rRNA binding proteins, it binds directly to 16S rRNA where it nucleates assembly of the body of the 30S subunit. In terms of biological role, with S5 and S12 plays an important role in translational accuracy. The polypeptide is Small ribosomal subunit protein uS4 (Dichelobacter nodosus (strain VCS1703A)).